The following is a 720-amino-acid chain: Long chain acyl-CoA synthetase 8 (720 aa).

At Met-1 the chain carries N-acetylmethionine. 279-290 contacts ATP; it reads IMFTSGSTGLPK. The interval 554–582 is fatty acid-binding; the sequence is DEKGTRWFYTGDIGRFHPDGCLEVIDRKK.

It belongs to the ATP-dependent AMP-binding enzyme family. It depends on Mg(2+) as a cofactor.

It carries out the reaction a long-chain fatty acid + ATP + CoA = a long-chain fatty acyl-CoA + AMP + diphosphate. Its pathway is lipid metabolism; fatty acid metabolism. Its function is as follows. Activation of long-chain fatty acids for both synthesis of cellular lipids, and degradation via beta-oxidation. Preferentially uses palmitate, palmitoleate, oleate and linoleate. This is Long chain acyl-CoA synthetase 8 (LACS8) from Arabidopsis thaliana (Mouse-ear cress).